Consider the following 191-residue polypeptide: Molybdenum cofactor guanylyltransferase (191 aa).

GTP is bound by residues 13–15 (LAG), Lys26, Asp72, and Asp102. Asp102 provides a ligand contact to Mg(2+).

The protein belongs to the MobA family. In terms of assembly, monomer. The cofactor is Mg(2+).

It is found in the cytoplasm. The enzyme catalyses Mo-molybdopterin + GTP + H(+) = Mo-molybdopterin guanine dinucleotide + diphosphate. Transfers a GMP moiety from GTP to Mo-molybdopterin (Mo-MPT) cofactor (Moco or molybdenum cofactor) to form Mo-molybdopterin guanine dinucleotide (Mo-MGD) cofactor. This Pseudomonas putida (strain ATCC 47054 / DSM 6125 / CFBP 8728 / NCIMB 11950 / KT2440) protein is Molybdenum cofactor guanylyltransferase.